We begin with the raw amino-acid sequence, 139 residues long: MLMPRRVKHRKQHHPTRRGAAKGGTRLAFGDFGIQAVEAHYVTNRQIESARIAMTRHIKRGGKVWINIYPDRPLTKKPAETRMGSGKGSPEWWIANVKPGRVMFELSGVDETVAREAMRRAMHKLPMKCRFISREAGEF.

Positions 1–20 are enriched in basic residues; the sequence is MLMPRRVKHRKQHHPTRRGA. Residues 1-24 are disordered; the sequence is MLMPRRVKHRKQHHPTRRGAAKGG.

Belongs to the universal ribosomal protein uL16 family. In terms of assembly, part of the 50S ribosomal subunit.

Its function is as follows. Binds 23S rRNA and is also seen to make contacts with the A and possibly P site tRNAs. The polypeptide is Large ribosomal subunit protein uL16 (Nocardioides sp. (strain ATCC BAA-499 / JS614)).